We begin with the raw amino-acid sequence, 218 residues long: Adenylate kinase (218 aa).

Residue 14–19 (GAGKGT) participates in ATP binding. The tract at residues 34-63 (STGDMFRAAIKAGTELGKQAKALMDEGKLV) is NMP. AMP contacts are provided by residues T35, R40, 61-63 (KLV), 89-92 (GFPR), and Q96. An LID region spans residues 126-163 (GRRVHQASGRSYHIVYNPPKVEGKDDVTGEDLIIRADD). ATP-binding positions include R127 and 136–137 (SY). AMP contacts are provided by R160 and R171. K204 is a binding site for ATP.

It belongs to the adenylate kinase family. Monomer.

It is found in the cytoplasm. It catalyses the reaction AMP + ATP = 2 ADP. The protein operates within purine metabolism; AMP biosynthesis via salvage pathway; AMP from ADP: step 1/1. Catalyzes the reversible transfer of the terminal phosphate group between ATP and AMP. Plays an important role in cellular energy homeostasis and in adenine nucleotide metabolism. This Mannheimia succiniciproducens (strain KCTC 0769BP / MBEL55E) protein is Adenylate kinase.